Reading from the N-terminus, the 309-residue chain is DSC E3 ubiquitin ligase complex subunit C (309 aa).

N-linked (GlcNAc...) asparagine glycosylation is present at N61. Disordered regions lie at residues 88-110 and 148-177; these read LPPS…GKGK and EQAD…FDRL. 2 consecutive transmembrane segments (helical) span residues 257–277 and 289–309; these read DDML…AMWL and GLAV…RIMN.

Belongs to the dsc3 family. As to quaternary structure, component of the DSC E3 ubiquitin ligase complex composed of dscA, dscB, dscC and dscD.

It is found in the endoplasmic reticulum membrane. The protein operates within protein modification; protein ubiquitination. Functionally, component of the DSC E3 ubiquitin ligase complex which is required for the srbA transcriptional activator proteolytic cleavage to release the soluble transcription factor from the membrane in low oxygen or sterol conditions. Required for growth during hypoxia and triazole drug susceptibility, as well as for virulence in a murine model of invasive pulmonary aspergillosis (IPA). This chain is DSC E3 ubiquitin ligase complex subunit C, found in Aspergillus fumigatus (strain CBS 144.89 / FGSC A1163 / CEA10) (Neosartorya fumigata).